The following is a 103-amino-acid chain: Histone H4 (103 aa).

Positions 1 to 14 (MSGRGKGGKGLGKG) are enriched in gly residues. A disordered region spans residues 1 to 20 (MSGRGKGGKGLGKGGAKRHR). Residues Lys6, Lys9, Lys13, Lys17, Lys32, and Lys45 each carry the N6-(2-hydroxyisobutyryl)lysine; alternate modification. Lys6 is subject to N6-acetyl-N6-methyllysine; alternate. N6-butyryllysine; alternate occurs at positions 6, 9, 13, 17, 32, and 45. Lys6 carries the post-translational modification N6-glutaryllysine; alternate. The residue at position 9 (Lys9) is an N6-propionyllysine; alternate. Lys13 is subject to N6-acetyl-N6-methyllysine; alternate. N6-glutaryllysine; alternate is present on Lys13. An N6-propionyllysine; alternate mark is found at Lys17, Lys32, and Lys45. The DNA-binding element occupies 17 to 21 (KRHRK). An N6-glutaryllysine; alternate modification is found at Lys32. An N6-succinyllysine; alternate modification is found at Lys32. N6-glutaryllysine; alternate occurs at positions 60, 78, 80, and 92. Lys60 is subject to N6-(2-hydroxyisobutyryl)lysine. N6-(2-hydroxyisobutyryl)lysine; alternate is present on residues Lys78, Lys80, and Lys92. N6-butyryllysine; alternate occurs at positions 78, 80, and 92. Residues Lys78, Lys80, and Lys92 each carry the N6-propionyllysine; alternate modification. The residue at position 78 (Lys78) is an N6-succinyllysine. N6-succinyllysine; alternate is present on Lys92.

Belongs to the histone H4 family. As to quaternary structure, the nucleosome is a histone octamer containing two molecules each of H2A, H2B, H3 and H4 assembled in one H3-H4 heterotetramer and two H2A-H2B heterodimers. The octamer wraps approximately 147 bp of DNA. Post-translationally, butyrylation of histones marks active promoters and competes with histone acetylation. Glutarylation at Lys-92 (H4K91glu) destabilizes nucleosomes by promoting dissociation of the H2A-H2B dimers from nucleosomes.

The protein resides in the nucleus. The protein localises to the chromosome. Core component of nucleosome. Nucleosomes wrap and compact DNA into chromatin, limiting DNA accessibility to the cellular machineries which require DNA as a template. Histones thereby play a central role in transcription regulation, DNA repair, DNA replication and chromosomal stability. DNA accessibility is regulated via a complex set of post-translational modifications of histones, also called histone code, and nucleosome remodeling. The polypeptide is Histone H4 (H4.1) (Oikopleura dioica (Tunicate)).